A 399-amino-acid chain; its full sequence is Elongation factor Tu (399 aa).

A tr-type G domain is found at 10-204 (KPHVNIGTIG…AVDASIPEPE (195 aa)). Residues 19–26 (GHVDHGKT) are G1. 19–26 (GHVDHGKT) contributes to the GTP binding site. Thr-26 provides a ligand contact to Mg(2+). Positions 60 to 64 (GITIN) are G2. The tract at residues 81–84 (DCPG) is G3. GTP-binding positions include 81 to 85 (DCPGH) and 136 to 139 (NKCD). The G4 stretch occupies residues 136 to 139 (NKCD). Positions 174-176 (SGL) are G5.

This sequence belongs to the TRAFAC class translation factor GTPase superfamily. Classic translation factor GTPase family. EF-Tu/EF-1A subfamily. As to quaternary structure, monomer.

The protein localises to the cytoplasm. The enzyme catalyses GTP + H2O = GDP + phosphate + H(+). GTP hydrolase that promotes the GTP-dependent binding of aminoacyl-tRNA to the A-site of ribosomes during protein biosynthesis. In Prochlorococcus marinus (strain MIT 9215), this protein is Elongation factor Tu.